Reading from the N-terminus, the 208-residue chain is Uracil phosphoribosyltransferase (208 aa).

Residues R78, R103, and 130–138 (DPMLATGGS) contribute to the 5-phospho-alpha-D-ribose 1-diphosphate site. Uracil-binding positions include I193 and 198 to 200 (GDA). Position 199 (D199) interacts with 5-phospho-alpha-D-ribose 1-diphosphate.

Belongs to the UPRTase family. It depends on Mg(2+) as a cofactor.

It catalyses the reaction UMP + diphosphate = 5-phospho-alpha-D-ribose 1-diphosphate + uracil. It participates in pyrimidine metabolism; UMP biosynthesis via salvage pathway; UMP from uracil: step 1/1. Its activity is regulated as follows. Allosterically activated by GTP. Its function is as follows. Catalyzes the conversion of uracil and 5-phospho-alpha-D-ribose 1-diphosphate (PRPP) to UMP and diphosphate. This is Uracil phosphoribosyltransferase from Enterobacter sp. (strain 638).